The primary structure comprises 266 residues: Putative carbamate hydrolase RutD (266 aa).

The AB hydrolase-1 domain occupies 14 to 115 (PVVVLISGLG…TMLVSVNGWL (102 aa)).

Belongs to the AB hydrolase superfamily. Hydrolase RutD family.

It carries out the reaction carbamate + 2 H(+) = NH4(+) + CO2. Functionally, involved in pyrimidine catabolism. May facilitate the hydrolysis of carbamate, a reaction that can also occur spontaneously. This Shigella flexneri serotype 5b (strain 8401) protein is Putative carbamate hydrolase RutD.